A 1169-amino-acid polypeptide reads, in one-letter code: Pesticidal crystal protein Cry1Fb (1169 aa).

Belongs to the delta endotoxin family.

In terms of biological role, promotes colloidosmotic lysis by binding to the midgut epithelial cells of insects. In Bacillus thuringiensis subsp. morrisoni, this protein is Pesticidal crystal protein Cry1Fb (cry1Fb).